Reading from the N-terminus, the 490-residue chain is Membrane-bound lytic murein transglycosylase F (490 aa).

A signal peptide spans 1–32 (MFALTAYRLRCAAWLLATGIFLLLAGCSEAKA). A non-LT domain region spans residues 33–269 (PTALERVQKE…RLKDRYYGHV (237 aa)). The tract at residues 270-490 (DVLGYVGAYT…PDDDEGDGKL (221 aa)) is LT domain. Residue Glu-316 is part of the active site. The segment at 467–490 (AESGLHLPGVNKTRPDDDEGDGKL) is disordered.

This sequence in the N-terminal section; belongs to the bacterial solute-binding protein 3 family. In the C-terminal section; belongs to the transglycosylase Slt family.

The protein resides in the cell outer membrane. It catalyses the reaction Exolytic cleavage of the (1-&gt;4)-beta-glycosidic linkage between N-acetylmuramic acid (MurNAc) and N-acetylglucosamine (GlcNAc) residues in peptidoglycan, from either the reducing or the non-reducing ends of the peptidoglycan chains, with concomitant formation of a 1,6-anhydrobond in the MurNAc residue.. In terms of biological role, murein-degrading enzyme that degrades murein glycan strands and insoluble, high-molecular weight murein sacculi, with the concomitant formation of a 1,6-anhydromuramoyl product. Lytic transglycosylases (LTs) play an integral role in the metabolism of the peptidoglycan (PG) sacculus. Their lytic action creates space within the PG sacculus to allow for its expansion as well as for the insertion of various structures such as secretion systems and flagella. In Pseudomonas paraeruginosa (strain DSM 24068 / PA7) (Pseudomonas aeruginosa (strain PA7)), this protein is Membrane-bound lytic murein transglycosylase F.